The following is a 514-amino-acid chain: Putative ankyrin repeat protein R863 (514 aa).

15 ANK repeats span residues 45 to 74 (AKID…LKHP), 84 to 114 (KSLN…DINS), 115 to 144 (KKNR…DVRA), 146 to 174 (KDYA…NIKV), 176 to 204 (DNFA…NIRA), 205 to 234 (DNNY…DIRA), 236 to 264 (NNYA…NVKS), 266 to 294 (NDCA…DVRS), 295 to 324 (ENDY…NVRA), 325 to 354 (DNNY…NIRS), 356 to 384 (NDYA…NFKS), 385 to 414 (DYDC…DIRV), 415 to 444 (NNDY…DIRA), 446 to 474 (NDYA…NVKA), and 476 to 504 (NNYA…DVRS).

The polypeptide is Putative ankyrin repeat protein R863 (Acanthamoeba polyphaga mimivirus (APMV)).